The primary structure comprises 490 residues: Aspartyl/glutamyl-tRNA(Asn/Gln) amidotransferase subunit B (490 aa).

Belongs to the GatB/GatE family. GatB subfamily. Heterotrimer of A, B and C subunits.

It carries out the reaction L-glutamyl-tRNA(Gln) + L-glutamine + ATP + H2O = L-glutaminyl-tRNA(Gln) + L-glutamate + ADP + phosphate + H(+). The enzyme catalyses L-aspartyl-tRNA(Asn) + L-glutamine + ATP + H2O = L-asparaginyl-tRNA(Asn) + L-glutamate + ADP + phosphate + 2 H(+). In terms of biological role, allows the formation of correctly charged Asn-tRNA(Asn) or Gln-tRNA(Gln) through the transamidation of misacylated Asp-tRNA(Asn) or Glu-tRNA(Gln) in organisms which lack either or both of asparaginyl-tRNA or glutaminyl-tRNA synthetases. The reaction takes place in the presence of glutamine and ATP through an activated phospho-Asp-tRNA(Asn) or phospho-Glu-tRNA(Gln). In Methylobacterium radiotolerans (strain ATCC 27329 / DSM 1819 / JCM 2831 / NBRC 15690 / NCIMB 10815 / 0-1), this protein is Aspartyl/glutamyl-tRNA(Asn/Gln) amidotransferase subunit B.